The primary structure comprises 539 residues: DNA damage-binding protein CMR1 (539 aa).

The interval 22 to 89 (LNLPTEAKKE…ALKQEDLGGS (68 aa)) is disordered. Residues 27 to 39 (EAKKESVDPEVAP) are compositionally biased toward basic and acidic residues. WD repeat units lie at residues 182–223 (VTKE…EPLQ), 226–268 (LHHA…DVLD), 316–356 (LGEK…TART), 377–415 (NSRL…LDML), 462–505 (GRWV…LAHL), and 508–539 (ALMT…YWWE).

It belongs to the WD repeat DDB2/WDR76 family.

Its function is as follows. DNA-binding protein that binds to both single- and double-stranded DNA. Binds preferentially to UV-damaged DNA. May be involved in DNA-metabolic processes. The protein is DNA damage-binding protein CMR1 of Yarrowia lipolytica (strain CLIB 122 / E 150) (Yeast).